The chain runs to 454 residues: Chromosomal replication initiator protein DnaA (454 aa).

Residues 1 to 71 (MTKEQWGQLQ…HEVRQEDPAV (71 aa)) are domain I, interacts with DnaA modulators. Residues 71–112 (VRRLRFAVPSHVNATTKPARPAQATAPRAPAEKTPRSTLSTA) form a domain II region. A disordered region spans residues 82-108 (VNATTKPARPAQATAPRAPAEKTPRST). Over residues 84–99 (ATTKPARPAQATAPRA) the composition is skewed to low complexity. A domain III, AAA+ region region spans residues 113–334 (PLDARFTFDN…GALTRLCAFA (222 aa)). ATP-binding residues include glycine 157, glycine 159, lysine 160, and threonine 161. The tract at residues 335–454 (SLVGREIDME…LELLRRALEE (120 aa)) is domain IV, binds dsDNA.

The protein belongs to the DnaA family. In terms of assembly, oligomerizes as a right-handed, spiral filament on DNA at oriC.

The protein localises to the cytoplasm. In terms of biological role, plays an essential role in the initiation and regulation of chromosomal replication. ATP-DnaA binds to the origin of replication (oriC) to initiate formation of the DNA replication initiation complex once per cell cycle. Binds the DnaA box (a 9 base pair repeat at the origin) and separates the double-stranded (ds)DNA. Forms a right-handed helical filament on oriC DNA; dsDNA binds to the exterior of the filament while single-stranded (ss)DNA is stabiized in the filament's interior. The ATP-DnaA-oriC complex binds and stabilizes one strand of the AT-rich DNA unwinding element (DUE), permitting loading of DNA polymerase. After initiation quickly degrades to an ADP-DnaA complex that is not apt for DNA replication. Binds acidic phospholipids. This chain is Chromosomal replication initiator protein DnaA, found in Roseobacter denitrificans (strain ATCC 33942 / OCh 114) (Erythrobacter sp. (strain OCh 114)).